Here is a 101-residue protein sequence, read N- to C-terminus: Small ribosomal subunit protein uS14 (101 aa).

It belongs to the universal ribosomal protein uS14 family. In terms of assembly, part of the 30S ribosomal subunit. Contacts proteins S3 and S10.

Binds 16S rRNA, required for the assembly of 30S particles and may also be responsible for determining the conformation of the 16S rRNA at the A site. This Acinetobacter baumannii (strain SDF) protein is Small ribosomal subunit protein uS14.